A 141-amino-acid polypeptide reads, in one-letter code: Large ribosomal subunit protein uL11 (141 aa).

It belongs to the universal ribosomal protein uL11 family. In terms of assembly, part of the ribosomal stalk of the 50S ribosomal subunit. Interacts with L10 and the large rRNA to form the base of the stalk. L10 forms an elongated spine to which L12 dimers bind in a sequential fashion forming a multimeric L10(L12)X complex. In terms of processing, one or more lysine residues are methylated.

Functionally, forms part of the ribosomal stalk which helps the ribosome interact with GTP-bound translation factors. The chain is Large ribosomal subunit protein uL11 from Acaryochloris marina (strain MBIC 11017).